We begin with the raw amino-acid sequence, 239 residues long: tRNA (guanine-N(7)-)-methyltransferase (239 aa).

S-adenosyl-L-methionine-binding residues include glutamate 69, glutamate 94, aspartate 121, and aspartate 144. Residue aspartate 144 is part of the active site. Residue lysine 148 coordinates substrate. Residues 150 to 155 (RHNKRR) are interaction with RNA. Substrate contacts are provided by residues aspartate 180 and 217–220 (TKFE).

This sequence belongs to the class I-like SAM-binding methyltransferase superfamily. TrmB family. As to quaternary structure, monomer.

The enzyme catalyses guanosine(46) in tRNA + S-adenosyl-L-methionine = N(7)-methylguanosine(46) in tRNA + S-adenosyl-L-homocysteine. It functions in the pathway tRNA modification; N(7)-methylguanine-tRNA biosynthesis. Its function is as follows. Catalyzes the formation of N(7)-methylguanine at position 46 (m7G46) in tRNA. This Escherichia coli O6:K15:H31 (strain 536 / UPEC) protein is tRNA (guanine-N(7)-)-methyltransferase.